Here is a 43-residue protein sequence, read N- to C-terminus: Potassium channel toxin gamma-KTx 4.12 (43 aa).

4 disulfides stabilise this stretch: C5–C23, C11–C34, C20–C39, and C24–C41.

Expressed by the venom gland.

The protein localises to the secreted. Its function is as follows. Reversibly blocks Kv11/ERG potassium channels. Is less toxic than ergtoxin (AC Q86QT3). This chain is Potassium channel toxin gamma-KTx 4.12, found in Centruroides sculpturatus (Arizona bark scorpion).